We begin with the raw amino-acid sequence, 139 residues long: Ribonuclease P/MRP protein subunit POP5 (139 aa).

It belongs to the eukaryotic/archaeal RNase P protein component 2 family.

The protein localises to the nucleus. It catalyses the reaction Endonucleolytic cleavage of RNA, removing 5'-extranucleotides from tRNA precursor.. Its function is as follows. Component of ribonuclease P, a protein complex that generates mature tRNA molecules by cleaving their 5'-ends. Also a component of RNase MRP, which cleaves pre-rRNA sequences. The chain is Ribonuclease P/MRP protein subunit POP5 from Schizosaccharomyces pombe (strain 972 / ATCC 24843) (Fission yeast).